Here is a 196-residue protein sequence, read N- to C-terminus: Carnitine operon protein CaiE (196 aa).

The tract at residues 173 to 196 is disordered; that stretch reads TQPLRQMEENRPRLQGTTDVTPKR. A compositionally biased stretch (polar residues) spans 187-196; sequence QGTTDVTPKR.

Belongs to the transferase hexapeptide repeat family.

It participates in amine and polyamine metabolism; carnitine metabolism. Functionally, overproduction of CaiE stimulates the activity of CaiB and CaiD. The chain is Carnitine operon protein CaiE from Escherichia coli O6:K15:H31 (strain 536 / UPEC).